The primary structure comprises 404 residues: Floricaula/leafy-like protein FL1 (404 aa).

The interval 210 to 251 (IGVPEHSSESDERKADTNKQKRRRSKEPGEDGEDRPREHPFI) is disordered. Basic and acidic residues-rich tracts occupy residues 215–228 (HSSE…DTNK) and 235–249 (KEPG…REHP). 3 consecutive DNA-binding regions follow at residues 246 to 250 (REHPF), 315 to 322 (NKPKMRHY), and 386 to 389 (YVPT).

The protein belongs to the FLO/LFY family. As to expression, expressed in both male and female cones, vegetative buds and needles, but not in the roots.

It localises to the nucleus. Functionally, probable transcription factor. The chain is Floricaula/leafy-like protein FL1 from Pinus radiata (Monterey pine).